The following is a 604-amino-acid chain: Baculoviral IAP repeat-containing protein 3 (604 aa).

Residues 29-96 (ELYRMSTYST…RNLYPSCSFI (68 aa)) form a BIR 1 repeat. Residue Arg-130 is modified to Omega-N-methylarginine. A Phosphoserine modification is found at Ser-140. BIR repeat units follow at residues 169 to 235 (EEDR…CPFV) and 255 to 322 (LAAR…CEYL). Residues Cys-292, Cys-295, His-312, and Cys-319 each coordinate Zn(2+). A CARD domain is found at 439-529 (RESDDVSLIR…MLYKRFFVQQ (91 aa)). The RING-type zinc finger occupies 557-592 (CKVCMDKEVSIVFIPCGHLVVCRDCAPSLRKCPICR).

Belongs to the IAP family. Interacts with PRSS25; the interaction inhibits apoptotic suppressor activity. The BIR motifs region interacts with TNF receptor associated factors 1 and 2 (TRAF1 and TRAF2) to form a heteromeric complex, which is then recruited to the tumor necrosis factor receptor 2 (TNFR2). Interaction with TRAF2 is required for ubiquitination of IKBKE, degradation of NFKBIA and activation of NF-kappa-B. Interacts with RIP1, RIP2, RIP3, RIP4 and USP19. In terms of processing, auto-ubiquitinated and degraded by the proteasome in apoptotic cells.

The protein resides in the cytoplasm. It localises to the nucleus. It catalyses the reaction S-ubiquitinyl-[E2 ubiquitin-conjugating enzyme]-L-cysteine + [acceptor protein]-L-lysine = [E2 ubiquitin-conjugating enzyme]-L-cysteine + N(6)-ubiquitinyl-[acceptor protein]-L-lysine.. Its activity is regulated as follows. USP19 regulates the stability of BIRC3/c-IAP2 by preventing its ubiquitination. In terms of biological role, multi-functional protein which regulates not only caspases and apoptosis, but also modulates inflammatory signaling and immunity, mitogenic kinase signaling and cell proliferation, as well as cell invasion and metastasis. Acts as an E3 ubiquitin-protein ligase regulating NF-kappa-B signaling and regulates both canonical and non-canonical NF-kappa-B signaling by acting in opposite directions: acts as a positive regulator of the canonical pathway and suppresses constitutive activation of non-canonical NF-kappa-B signaling. The target proteins for its E3 ubiquitin-protein ligase activity include: RIPK1, RIPK2, RIPK3, RIPK4, CASP3, CASP7, CASP8, IKBKE, TRAF1, and BCL10. Acts as an important regulator of innate immune signaling via regulation of Toll-like receptors (TLRs), Nodlike receptors (NLRs) and RIG-I like receptors (RLRs), collectively referred to as pattern recognition receptors (PRRs). Protects cells from spontaneous formation of the ripoptosome, a large multi-protein complex that has the capability to kill cancer cells in a caspase-dependent and caspase-independent manner. Suppresses ripoptosome formation by ubiquitinating RIPK1 and CASP8. The protein is Baculoviral IAP repeat-containing protein 3 (BIRC3) of Canis lupus familiaris (Dog).